The primary structure comprises 512 residues: Maturase K (512 aa).

Belongs to the intron maturase 2 family. MatK subfamily.

It localises to the plastid. It is found in the chloroplast. Functionally, usually encoded in the trnK tRNA gene intron. Probably assists in splicing its own and other chloroplast group II introns. The protein is Maturase K of Lemna minor (Common duckweed).